A 183-amino-acid chain; its full sequence is ATP synthase subunit delta (183 aa).

It belongs to the ATPase delta chain family. In terms of assembly, F-type ATPases have 2 components, F(1) - the catalytic core - and F(0) - the membrane proton channel. F(1) has five subunits: alpha(3), beta(3), gamma(1), delta(1), epsilon(1). F(0) has three main subunits: a(1), b(2) and c(10-14). The alpha and beta chains form an alternating ring which encloses part of the gamma chain. F(1) is attached to F(0) by a central stalk formed by the gamma and epsilon chains, while a peripheral stalk is formed by the delta and b chains.

Its subcellular location is the cell inner membrane. F(1)F(0) ATP synthase produces ATP from ADP in the presence of a proton or sodium gradient. F-type ATPases consist of two structural domains, F(1) containing the extramembraneous catalytic core and F(0) containing the membrane proton channel, linked together by a central stalk and a peripheral stalk. During catalysis, ATP synthesis in the catalytic domain of F(1) is coupled via a rotary mechanism of the central stalk subunits to proton translocation. Its function is as follows. This protein is part of the stalk that links CF(0) to CF(1). It either transmits conformational changes from CF(0) to CF(1) or is implicated in proton conduction. The sequence is that of ATP synthase subunit delta from Syntrophobacter fumaroxidans (strain DSM 10017 / MPOB).